Consider the following 264-residue polypeptide: Small ribosomal subunit protein eS1 (264 aa).

Lysine 34 carries the N6-acetyllysine; alternate modification. Lysine 34 participates in a covalent cross-link: Glycyl lysine isopeptide (Lys-Gly) (interchain with G-Cter in SUMO2); alternate. Lysine 56 bears the N6-acetyllysine mark. Tyrosine 155 is modified (ADP-ribosyltyrosine). Residues 233-264 (GEGGSSGKAAGDETGAKVERADGYEPPVQESV) form a disordered region. Serine 237 carries the post-translational modification Phosphoserine. Over residues 242–255 (AGDETGAKVERADG) the composition is skewed to basic and acidic residues. The residue at position 249 (lysine 249) is an N6-acetyllysine; alternate. Residue lysine 249 forms a Glycyl lysine isopeptide (Lys-Gly) (interchain with G-Cter in SUMO2); alternate linkage. Position 256 is a phosphotyrosine (tyrosine 256). The residue at position 263 (serine 263) is a Phosphoserine.

The protein belongs to the eukaryotic ribosomal protein eS1 family. In terms of assembly, component of the small ribosomal subunit. Mature ribosomes consist of a small (40S) and a large (60S) subunit. The 40S subunit contains about 33 different proteins and 1 molecule of RNA (18S). The 60S subunit contains about 49 different proteins and 3 molecules of RNA (28S, 5.8S and 5S). Identified in a IGF2BP1-dependent mRNP granule complex containing untranslated mRNAs. Binds with high affinity to IPO4. Interacts with DDIT3. Part of the small subunit (SSU) processome, composed of more than 70 proteins and the RNA chaperone small nucleolar RNA (snoRNA) U3. ADP-ribosylated at Tyr-155 by PARP1 in presence of HPF1.

The protein localises to the cytoplasm. It localises to the nucleus. It is found in the nucleolus. Functionally, component of the small ribosomal subunit. The ribosome is a large ribonucleoprotein complex responsible for the synthesis of proteins in the cell. Part of the small subunit (SSU) processome, first precursor of the small eukaryotic ribosomal subunit. During the assembly of the SSU processome in the nucleolus, many ribosome biogenesis factors, an RNA chaperone and ribosomal proteins associate with the nascent pre-rRNA and work in concert to generate RNA folding, modifications, rearrangements and cleavage as well as targeted degradation of pre-ribosomal RNA by the RNA exosome. May play a role during erythropoiesis through regulation of transcription factor DDIT3. This Mus musculus (Mouse) protein is Small ribosomal subunit protein eS1 (Rps3a).